Consider the following 308-residue polypeptide: Probable D,D-dipeptide transport ATP-binding protein DdpF (308 aa).

The ABC transporter domain occupies 8 to 243; it reads LRDVHINFPA…PAHPYTRLLL (236 aa). 49–56 contributes to the ATP binding site; sequence GESGCGKS.

This sequence belongs to the ABC transporter superfamily. In terms of assembly, the complex is composed of two ATP-binding proteins (DdpD and DdpF), two transmembrane proteins (DdpB and DdpC) and a solute-binding protein (DdpA).

It localises to the cell inner membrane. Part of the ABC transporter complex DdpABCDF, which is probably involved in D,D-dipeptide transport. Probably responsible for energy coupling to the transport system. The polypeptide is Probable D,D-dipeptide transport ATP-binding protein DdpF (Escherichia coli (strain K12)).